A 99-amino-acid chain; its full sequence is Small ribosomal subunit protein eS24 (99 aa).

This sequence belongs to the eukaryotic ribosomal protein eS24 family.

This chain is Small ribosomal subunit protein eS24 (rps2e), found in Thermoplasma volcanium (strain ATCC 51530 / DSM 4299 / JCM 9571 / NBRC 15438 / GSS1).